A 1457-amino-acid polypeptide reads, in one-letter code: ABC transporter G family member 36 (1457 aa).

The segment at 14 to 43 (RLGGSMRGDSGSMWRRGDDVFSRSSREEDD) is disordered. Over residues 28–39 (RRGDDVFSRSSR) the composition is skewed to basic and acidic residues. Positions 164-437 (GNALGILPNR…FESMGFKCPD (274 aa)) constitute an ABC transporter 1 domain. 197–204 (GPPGSGKT) provides a ligand contact to ATP. Residues 515–728 (ELLKANIDRE…AQNAISVNEL (214 aa)) enclose the ABC transmembrane type-2 1 domain. The next 7 helical transmembrane spans lie at 533 to 553 (FVYMFRTFQLMVVSLIAMTLF), 565 to 585 (SGGIYMGALFFGVLMIMFNGF), 621 to 641 (IPITFIEVGGYVFLTYYVIGF), 653 to 673 (LLMLAINQMAGSLFRFIGGAA), 677 to 697 (IVANVFASFMLLIFMVLGGFI), 706 to 726 (WWIWGYWISPMMYAQNAISVN), and 765 to 785 (IGFGAMIGFTILFNALFTLAL). Residues 821–841 (SSGSTRRPMGNGTENDSTIVD) form a disordered region. An ABC transporter 2 domain is found at 860–1112 (LSFDNVRYSV…ELIKYFESIP (253 aa)). 905-912 (GVSGAGKT) is an ATP binding site. Residues 1185–1399 (TQCMACLWKQ…TLYGLVVSQF (215 aa)) form the ABC transmembrane type-2 2 domain. 7 consecutive transmembrane segments (helical) span residues 1209–1229 (FFFTTVIALLFGTIFWDLGGK), 1244–1264 (YAAVLFIGVMNCTSVQPVVAV), 1292–1312 (IPYTLVQATVYGIIVYAMIGF), 1319–1339 (FFWYLFFMVFTLLYFTFYGMM), 1349–1369 (IASIVSSAFYAIWNLFSGFVI), 1380–1400 (WYCWACPVAWTLYGLVVSQFG), and 1429–1449 (WVATVVAAFAFLFASLFGFAI).

Belongs to the ABC transporter superfamily. ABCG family. PDR (TC 3.A.1.205) subfamily.

It is found in the membrane. In terms of biological role, may be a general defense protein. The protein is ABC transporter G family member 36 of Oryza sativa subsp. japonica (Rice).